The primary structure comprises 107 residues: Large ribosomal subunit protein uL24 (107 aa).

This sequence belongs to the universal ribosomal protein uL24 family. As to quaternary structure, part of the 50S ribosomal subunit.

One of two assembly initiator proteins, it binds directly to the 5'-end of the 23S rRNA, where it nucleates assembly of the 50S subunit. In terms of biological role, one of the proteins that surrounds the polypeptide exit tunnel on the outside of the subunit. This chain is Large ribosomal subunit protein uL24, found in Solidesulfovibrio magneticus (strain ATCC 700980 / DSM 13731 / RS-1) (Desulfovibrio magneticus).